A 110-amino-acid chain; its full sequence is Large ribosomal subunit protein uL22 (110 aa).

It belongs to the universal ribosomal protein uL22 family. As to quaternary structure, part of the 50S ribosomal subunit.

Functionally, this protein binds specifically to 23S rRNA; its binding is stimulated by other ribosomal proteins, e.g. L4, L17, and L20. It is important during the early stages of 50S assembly. It makes multiple contacts with different domains of the 23S rRNA in the assembled 50S subunit and ribosome. In terms of biological role, the globular domain of the protein is located near the polypeptide exit tunnel on the outside of the subunit, while an extended beta-hairpin is found that lines the wall of the exit tunnel in the center of the 70S ribosome. The sequence is that of Large ribosomal subunit protein uL22 from Delftia acidovorans (strain DSM 14801 / SPH-1).